The chain runs to 183 residues: Putative manganese efflux pump MntP (183 aa).

6 helical membrane passes run 6–26, 40–60, 64–84, 101–121, 135–155, and 158–178; these read LFLI…CIGL, IYFG…GFLF, IATM…IIMI, MNII…FTAL, LFIG…SKYL, and IDVI…FFGL.

This sequence belongs to the MntP (TC 9.B.29) family.

The protein localises to the cell membrane. Its function is as follows. Probably functions as a manganese efflux pump. The protein is Putative manganese efflux pump MntP of Clostridium tetani (strain Massachusetts / E88).